We begin with the raw amino-acid sequence, 142 residues long: Small ribosomal subunit protein uS12 (142 aa).

It belongs to the universal ribosomal protein uS12 family. Part of the 30S ribosomal subunit.

Its function is as follows. With S4 and S5 plays an important role in translational accuracy. Located at the interface of the 30S and 50S subunits. The polypeptide is Small ribosomal subunit protein uS12 (Methanothrix thermoacetophila (strain DSM 6194 / JCM 14653 / NBRC 101360 / PT) (Methanosaeta thermophila)).